A 549-amino-acid polypeptide reads, in one-letter code: TBC1 domain family member 3 (549 aa).

The Rab-GAP TBC domain maps to 101–293; that stretch reads GMPMNIRGPM…RLWDVYLVEG (193 aa). 2 S-palmitoyl cysteine lipidation sites follow: Cys-318 and Cys-325. Residues 350-419 are disordered; it reads LTRKKGDLPP…PRSSTPCPGG (70 aa). Residues 398 to 417 are compositionally biased toward low complexity; that stretch reads PRPIWSASPPRAPRSSTPCP.

Ubiquitinated by a CUL7-based E3 ligase, which leads to proteasomal degradation. In terms of processing, palmitoylation is required for membrane localization and protects TBC1D3 from ubiquitination. Expressed in liver, skeletal muscle, kidney, pancreas, spleen, testis, ovary, small intestine and peripheral blood leukocytes. Overexpressed in prostate cancers.

It is found in the cell membrane. In terms of biological role, acts as a GTPase activating protein for RAB5. Does not act on RAB4 or RAB11. This Homo sapiens (Human) protein is TBC1 domain family member 3 (TBC1D3).